The primary structure comprises 368 residues: Alanine racemase (368 aa).

Catalysis depends on Lys-40, which acts as the Proton acceptor; specific for D-alanine. The residue at position 40 (Lys-40) is an N6-(pyridoxal phosphate)lysine. Arg-134 lines the substrate pocket. The active-site Proton acceptor; specific for L-alanine is the Tyr-263. Substrate is bound at residue Met-310.

This sequence belongs to the alanine racemase family. Requires pyridoxal 5'-phosphate as cofactor.

It carries out the reaction L-alanine = D-alanine. It participates in amino-acid biosynthesis; D-alanine biosynthesis; D-alanine from L-alanine: step 1/1. Its function is as follows. Catalyzes the interconversion of L-alanine and D-alanine. May also act on other amino acids. In Listeria innocua serovar 6a (strain ATCC BAA-680 / CLIP 11262), this protein is Alanine racemase (alr).